A 155-amino-acid polypeptide reads, in one-letter code: Small ribosomal subunit protein uS7 (155 aa).

This sequence belongs to the universal ribosomal protein uS7 family. Part of the 30S ribosomal subunit. Contacts proteins S9 and S11.

One of the primary rRNA binding proteins, it binds directly to 16S rRNA where it nucleates assembly of the head domain of the 30S subunit. Is located at the subunit interface close to the decoding center, probably blocks exit of the E-site tRNA. The polypeptide is Small ribosomal subunit protein uS7 (Mycoplasma capricolum subsp. capricolum (strain California kid / ATCC 27343 / NCTC 10154)).